We begin with the raw amino-acid sequence, 153 residues long: Pheromone-binding protein Gp-9 (153 aa).

Residues 1–19 (MKTLILHICIFALVAFASA) form the signal peptide. Disulfide bonds link Cys37–Cys77, Cys73–Cys129, and Cys118–Cys138.

It belongs to the PBP/GOBP family. In terms of assembly, homodimer.

It is found in the secreted. In terms of biological role, colony queen number, a major feature of social organization, is associated with worker genotype for Gp-9. Colonies are headed by either a single reproductive queen (monogyne form) or multiple queens (polygyne form). Differences in worker Gp-9 genotypes between social forms may cause differences in workers' abilities to recognize queens and regulate their numbers. This chain is Pheromone-binding protein Gp-9, found in Solenopsis nigella gensterblumi (Fire ant).